The following is a 276-amino-acid chain: Radial spoke head protein 9 homolog (276 aa).

It belongs to the flagellar radial spoke RSP9 family. As to quaternary structure, component of the axonemal radial spoke 1 (RS1) and 2 (RS2) complexes, at least composed of spoke head proteins RSPH1, RSPH3, RSPH9 and the cilia-specific component RSPH4A or sperm-specific component RSPH6A, spoke stalk proteins RSPH14, DNAJB13, DYDC1, ROPN1L and NME5, and the RS1 complex-specific anchor protein IQUB. Interacts with IQUB. Interacts with RSPH3B. Interacts with RSPH4A. Interacts with RSPH6A. Interacts with CFAP61. Interacts with LRRC23.

It is found in the cytoplasm. It localises to the cytoskeleton. The protein localises to the cilium axoneme. The protein resides in the flagellum axoneme. Its subcellular location is the cell projection. It is found in the kinocilium. Functionally, functions as part of axonemal radial spoke complexes that play an important part in the motility of sperm and cilia. Essential for both the radial spoke head assembly and the central pair microtubule stability in ependymal motile cilia. Required for motility of olfactory and neural cilia and for the structural integrity of ciliary axonemes in both 9+0 and 9+2 motile cilia. The protein is Radial spoke head protein 9 homolog (RSPH9) of Homo sapiens (Human).